The sequence spans 84 residues: Large ribosomal subunit protein bL27 (84 aa).

It belongs to the bacterial ribosomal protein bL27 family.

This Karelsulcia muelleri (strain GWSS) (Sulcia muelleri) protein is Large ribosomal subunit protein bL27.